Consider the following 301-residue polypeptide: Protein SCO1 homolog, mitochondrial (301 aa).

The transit peptide at 1 to 67 (MAMLVLVPGR…PGYCLGTRPL (67 aa)) directs the protein to the mitochondrion. Residues 63–91 (GTRPLSTARPPPPWSQKGPGDSTRPSKPG) form a disordered region. The Mitochondrial matrix portion of the chain corresponds to 68-92 (STARPPPPWSQKGPGDSTRPSKPGP). Residues 93–111 (VSWKSLAITFAIGGALLAG) traverse the membrane as a helical segment. The Mitochondrial intermembrane portion of the chain corresponds to 112–301 (MKHVKKEKAE…THMRPYRKKS (190 aa)). Residues 118-131 (EKAEKLEKERQRHI) are important for dimerization. Positions 169, 173, and 260 each coordinate Cu cation. An intrachain disulfide couples cysteine 169 to cysteine 173.

Belongs to the SCO1/2 family. In terms of assembly, homodimer. Interacts with COA6. Found in a complex with TMEM177, COX20, COA6, MT-CO2/COX2, COX18 and SCO2. Interacts with TMEM177 in a COX20-dependent manner. Interacts with COX20 in a MT-CO2/COX2- and COX18-dependent manner. Interacts with COX16. Predominantly expressed in tissues characterized by high rates of oxidative phosphorylation (OxPhos), including muscle, heart, and brain.

It is found in the mitochondrion. It localises to the mitochondrion inner membrane. Copper metallochaperone essential for the maturation of cytochrome c oxidase subunit II (MT-CO2/COX2). Not required for the synthesis of MT-CO2/COX2 but plays a crucial role in stabilizing MT-CO2/COX2 during its subsequent maturation. Involved in transporting copper to the Cu(A) site on MT-CO2/COX2. Plays an important role in the regulation of copper homeostasis by controlling the abundance and cell membrane localization of copper transporter CTR1. This is Protein SCO1 homolog, mitochondrial (SCO1) from Homo sapiens (Human).